The chain runs to 446 residues: Adenylosuccinate synthetase (446 aa).

GTP contacts are provided by residues 12–18 and 40–42; these read GDEGKGK and GHT. Asp13 acts as the Proton acceptor in catalysis. Positions 13 and 40 each coordinate Mg(2+). IMP is bound by residues 13–16, 38–41, Thr128, Arg142, Gln223, Thr238, and Arg302; these read DEGK and NAGH. His41 serves as the catalytic Proton donor. 298–304 lines the substrate pocket; it reads TTTGRRR. Residues Arg304, 330 to 332, and 412 to 414 contribute to the GTP site; these read KLD and SLG.

This sequence belongs to the adenylosuccinate synthetase family. Homodimer. Mg(2+) is required as a cofactor.

The protein resides in the cytoplasm. It catalyses the reaction IMP + L-aspartate + GTP = N(6)-(1,2-dicarboxyethyl)-AMP + GDP + phosphate + 2 H(+). It functions in the pathway purine metabolism; AMP biosynthesis via de novo pathway; AMP from IMP: step 1/2. Plays an important role in the de novo pathway of purine nucleotide biosynthesis. Catalyzes the first committed step in the biosynthesis of AMP from IMP. This Acaryochloris marina (strain MBIC 11017) protein is Adenylosuccinate synthetase.